A 542-amino-acid polypeptide reads, in one-letter code: CTP synthase (542 aa).

The interval 1 to 265 is amidoligase domain; it reads MPRYIFITGG…DTEILRCFGI (265 aa). Ser-13 is a CTP binding site. Ser-13 contacts UTP. An ATP-binding site is contributed by 14–19; the sequence is SLGKGL. Tyr-54 contacts L-glutamine. Asp-71 is an ATP binding site. Mg(2+)-binding residues include Asp-71 and Glu-139. CTP-binding positions include 146 to 148, 186 to 191, and Lys-222; these read DIE and KTKPTQ. UTP-binding positions include 186–191 and Lys-222; that span reads KTKPTQ. 238–240 is a binding site for ATP; sequence RDA. A Glutamine amidotransferase type-1 domain is found at 298–541; that stretch reads YVGLLDAYKS…IAAALHQSRM (244 aa). Gly-353 serves as a coordination point for L-glutamine. Cys-380 (nucleophile; for glutamine hydrolysis) is an active-site residue. L-glutamine is bound by residues 381–384, Glu-404, and Arg-469; that span reads YGMQ. Catalysis depends on residues His-514 and Glu-516.

It belongs to the CTP synthase family. In terms of assembly, homotetramer.

It carries out the reaction UTP + L-glutamine + ATP + H2O = CTP + L-glutamate + ADP + phosphate + 2 H(+). The enzyme catalyses L-glutamine + H2O = L-glutamate + NH4(+). The catalysed reaction is UTP + NH4(+) + ATP = CTP + ADP + phosphate + 2 H(+). It functions in the pathway pyrimidine metabolism; CTP biosynthesis via de novo pathway; CTP from UDP: step 2/2. With respect to regulation, allosterically activated by GTP, when glutamine is the substrate; GTP has no effect on the reaction when ammonia is the substrate. The allosteric effector GTP functions by stabilizing the protein conformation that binds the tetrahedral intermediate(s) formed during glutamine hydrolysis. Inhibited by the product CTP, via allosteric rather than competitive inhibition. Catalyzes the ATP-dependent amination of UTP to CTP with either L-glutamine or ammonia as the source of nitrogen. Regulates intracellular CTP levels through interactions with the four ribonucleotide triphosphates. The sequence is that of CTP synthase from Maricaulis maris (strain MCS10) (Caulobacter maris).